Consider the following 237-residue polypeptide: Probable transcriptional regulatory protein Fjoh_2560 (237 aa).

The protein belongs to the TACO1 family.

Its subcellular location is the cytoplasm. In Flavobacterium johnsoniae (strain ATCC 17061 / DSM 2064 / JCM 8514 / BCRC 14874 / CCUG 350202 / NBRC 14942 / NCIMB 11054 / UW101) (Cytophaga johnsonae), this protein is Probable transcriptional regulatory protein Fjoh_2560.